The primary structure comprises 784 residues: Alpha-catulin (784 aa).

Positions 35 to 247 (IKTKSIEQTL…LLLTASKTYL (213 aa)) are vinculin/alpha-catenin homology 1 (VH1) region. The stretch at 387–414 (ASGLEVTVERLNRRLKDLSKQLQIVAME) forms a coiled coil. Residues 552 to 696 (PRPGKHGTTQ…MVKSPTVGKT (145 aa)) form a vinculin/alpha-catenin homology 2 (VH2) region region. Residues 737–784 (GSVNGRTGADGERTSRESTVWRRTPSIRRAAPPTSSHLSANNSSSIHI) are disordered. A compositionally biased stretch (basic and acidic residues) spans 745–756 (ADGERTSRESTV). Low complexity predominate over residues 771 to 784 (SSHLSANNSSSIHI).

Belongs to the vinculin/alpha-catenin family. As to quaternary structure, interacts with slo-1 (via C-terminus); the interaction is required for localization of slo-1 to dense bodies in body wall muscle cells. Interacts (via N-terminus) with dystrophin complex member dyb-1 (via C-terminus); the interaction is required for localization of the dystrophin complex and ctn-1 near dense bodies in muscle cells. Expressed in body wall muscles, vulval muscles, stomatointestinal cells and pharyngeal muscle cells. Expressed in enteric muscles, nerve ring neurons and in the ventral nerve cord.

The protein localises to the cytoplasm. Required for slo-1 potassium ion channel clustering at presynaptic terminals and in egg-laying muscles; clustering of slo-1 mediates the intoxicating and sedatory effects of ethanol on worms. Required for slo-1 localization to dense bodies in body wall muscle cells. Maintains the localization of the dystrophin complex near muscle cell dense bodies via its interaction with complex member dyb-1 which is required for slo-1 localization in muscle while slo-1 localization in neurons is independent of the dystrophin complex. This Caenorhabditis elegans protein is Alpha-catulin.